Here is a 335-residue protein sequence, read N- to C-terminus: DNA-directed RNA polymerase subunit alpha (335 aa).

The segment at 1-233 is alpha N-terminal domain (alpha-NTD); sequence MTRTANEFLT…QQIAIFVDLQ (233 aa). The segment at 247 to 335 is alpha C-terminal domain (alpha-CTD); that stretch reads VDPILLRPVD…MDDRFAYRSR (89 aa).

This sequence belongs to the RNA polymerase alpha chain family. Homodimer. The RNAP catalytic core consists of 2 alpha, 1 beta, 1 beta' and 1 omega subunit. When a sigma factor is associated with the core the holoenzyme is formed, which can initiate transcription.

It carries out the reaction RNA(n) + a ribonucleoside 5'-triphosphate = RNA(n+1) + diphosphate. DNA-dependent RNA polymerase catalyzes the transcription of DNA into RNA using the four ribonucleoside triphosphates as substrates. In Acinetobacter baumannii (strain AB307-0294), this protein is DNA-directed RNA polymerase subunit alpha.